Reading from the N-terminus, the 395-residue chain is S-adenosylmethionine synthase (395 aa).

His15 is an ATP binding site. Asp17 is a Mg(2+) binding site. Glu43 contacts K(+). L-methionine-binding residues include Glu56 and Gln99. The interval 99 to 109 (QSPDIAMGVDE) is flexible loop. ATP contacts are provided by residues 173 to 175 (DGK), 239 to 240 (RF), Asp248, 254 to 255 (RK), Ala271, and Lys275. Residue Asp248 coordinates L-methionine. Lys279 contributes to the L-methionine binding site.

The protein belongs to the AdoMet synthase family. As to quaternary structure, homotetramer; dimer of dimers. Mg(2+) serves as cofactor. The cofactor is K(+).

The protein localises to the cytoplasm. The enzyme catalyses L-methionine + ATP + H2O = S-adenosyl-L-methionine + phosphate + diphosphate. It functions in the pathway amino-acid biosynthesis; S-adenosyl-L-methionine biosynthesis; S-adenosyl-L-methionine from L-methionine: step 1/1. Functionally, catalyzes the formation of S-adenosylmethionine (AdoMet) from methionine and ATP. The overall synthetic reaction is composed of two sequential steps, AdoMet formation and the subsequent tripolyphosphate hydrolysis which occurs prior to release of AdoMet from the enzyme. The sequence is that of S-adenosylmethionine synthase from Desulforudis audaxviator (strain MP104C).